Reading from the N-terminus, the 760-residue chain is Xaa-Pro dipeptidyl-peptidase (760 aa).

Active-site charge relay system residues include Ser-349, Asp-469, and His-499.

Belongs to the peptidase S15 family. In terms of assembly, homodimer.

It localises to the cytoplasm. The catalysed reaction is Hydrolyzes Xaa-Pro-|- bonds to release unblocked, N-terminal dipeptides from substrates including Ala-Pro-|-p-nitroanilide and (sequentially) Tyr-Pro-|-Phe-Pro-|-Gly-Pro-|-Ile.. Removes N-terminal dipeptides sequentially from polypeptides having unsubstituted N-termini provided that the penultimate residue is proline. This is Xaa-Pro dipeptidyl-peptidase from Streptococcus pyogenes serotype M49 (strain NZ131).